The primary structure comprises 126 residues: Holo-[acyl-carrier-protein] synthase (126 aa).

Residues Asp9 and Glu58 each coordinate Mg(2+).

Belongs to the P-Pant transferase superfamily. AcpS family. It depends on Mg(2+) as a cofactor.

The protein resides in the cytoplasm. It catalyses the reaction apo-[ACP] + CoA = holo-[ACP] + adenosine 3',5'-bisphosphate + H(+). Functionally, transfers the 4'-phosphopantetheine moiety from coenzyme A to a Ser of acyl-carrier-protein. In Salmonella newport (strain SL254), this protein is Holo-[acyl-carrier-protein] synthase.